We begin with the raw amino-acid sequence, 423 residues long: Type II methyltransferase M.NgoBV (423 aa).

Positions isoleucine 4–leucine 423 constitute an SAM-dependent MTase C5-type domain. Cysteine 80 is a catalytic residue.

The protein belongs to the class I-like SAM-binding methyltransferase superfamily. C5-methyltransferase family.

The catalysed reaction is a 2'-deoxycytidine in DNA + S-adenosyl-L-methionine = a 5-methyl-2'-deoxycytidine in DNA + S-adenosyl-L-homocysteine + H(+). Functionally, a methylase, recognizes the double-stranded sequence 5'-GGNNCC-3', methylates C-5 on both strands, and protects the DNA from cleavage by the NgoBV endonuclease. This Neisseria gonorrhoeae protein is Type II methyltransferase M.NgoBV (ngoBVM).